The primary structure comprises 589 residues: Poly(3-hydroxyalkanoate) polymerase subunit PhaC (589 aa).

Residues 1–23 (MATGKGAAASTQEGKSQPFKVTP) form a disordered region. C319 is a catalytic residue.

Belongs to the PHA/PHB synthase family. Type I PhaC subfamily. In terms of assembly, monomer.

The protein resides in the cytoplasm. It catalyses the reaction (3R)-3-hydroxybutanoyl-CoA + [(3R)-hydroxybutanoate](n) = [(3R)-hydroxybutanoate](n+1) + CoA. It participates in biopolymer metabolism; poly-(R)-3-hydroxybutanoate biosynthesis. Its function is as follows. Polymerizes (R)-3-hydroxybutyryl-CoA to create polyhydroxybutyrate (PHB) which consists of thousands of hydroxybutyrate molecules linked end to end. PHB serves as an intracellular energy reserve material when cells grow under conditions of nutrient limitation. The chain is Poly(3-hydroxyalkanoate) polymerase subunit PhaC from Cupriavidus necator (strain ATCC 17699 / DSM 428 / KCTC 22496 / NCIMB 10442 / H16 / Stanier 337) (Ralstonia eutropha).